We begin with the raw amino-acid sequence, 630 residues long: tRNA uridine 5-carboxymethylaminomethyl modification enzyme MnmG (630 aa).

FAD contacts are provided by residues 14 to 19 (GAGHAG), valine 126, and serine 181. An NAD(+)-binding site is contributed by 273 to 287 (GPRYCPSIEDKVVRF). Glutamine 370 is a binding site for FAD.

This sequence belongs to the MnmG family. Homodimer. Heterotetramer of two MnmE and two MnmG subunits. Requires FAD as cofactor.

The protein localises to the cytoplasm. Its function is as follows. NAD-binding protein involved in the addition of a carboxymethylaminomethyl (cmnm) group at the wobble position (U34) of certain tRNAs, forming tRNA-cmnm(5)s(2)U34. This is tRNA uridine 5-carboxymethylaminomethyl modification enzyme MnmG from Alkaliphilus metalliredigens (strain QYMF).